The chain runs to 225 residues: Acidic leucine-rich nuclear phosphoprotein 32-related protein 2 (225 aa).

LRR repeat units lie at residues 39-60 (KLEL…PVLP), 61-82 (ALNY…DVLI), and 87-107 (EIKK…RTLK). Residues 121–161 (SSLGLLDDYRVKMFEMIPSLKILDGCDVDGEEVEEEFAAGE) form the LRRCT domain. Residues 155–175 (EEFAAGEGAEDSDEGDSDEDG) show a composition bias toward acidic residues. The interval 155 to 225 (EEFAAGEGAE…DEPEAKKSAE (71 aa)) is disordered.

The protein belongs to the ANP32 family.

The chain is Acidic leucine-rich nuclear phosphoprotein 32-related protein 2 from Caenorhabditis elegans.